The primary structure comprises 257 residues: Small ribosomal subunit protein uS15m (257 aa).

Residues 1 to 57 (MLRVAWRTLSLIRTRAVTQVLVPGLPGGGSAKFPFNQWGLQPRSLLLQAARGYVVRK) constitute a mitochondrion transit peptide. The segment at 225 to 257 (RALKAAAAAQKQAKRRNPDSPAKAIPKTLKDSQ) is disordered.

Belongs to the universal ribosomal protein uS15 family. As to quaternary structure, component of the mitochondrial small ribosomal subunit (mt-SSU). Mature mammalian 55S mitochondrial ribosomes consist of a small (28S) and a large (39S) subunit. The 28S small subunit contains a 12S ribosomal RNA (12S mt-rRNA) and 30 different proteins. The 39S large subunit contains a 16S rRNA (16S mt-rRNA), a copy of mitochondrial valine transfer RNA (mt-tRNA(Val)), which plays an integral structural role, and 52 different proteins. Interacts with METTL17.

It localises to the mitochondrion matrix. In Homo sapiens (Human), this protein is Small ribosomal subunit protein uS15m (MRPS15).